We begin with the raw amino-acid sequence, 235 residues long: Phosphoribosylaminoimidazole-succinocarboxamide synthase (235 aa).

The protein belongs to the SAICAR synthetase family.

The catalysed reaction is 5-amino-1-(5-phospho-D-ribosyl)imidazole-4-carboxylate + L-aspartate + ATP = (2S)-2-[5-amino-1-(5-phospho-beta-D-ribosyl)imidazole-4-carboxamido]succinate + ADP + phosphate + 2 H(+). Its pathway is purine metabolism; IMP biosynthesis via de novo pathway; 5-amino-1-(5-phospho-D-ribosyl)imidazole-4-carboxamide from 5-amino-1-(5-phospho-D-ribosyl)imidazole-4-carboxylate: step 1/2. This chain is Phosphoribosylaminoimidazole-succinocarboxamide synthase, found in Clostridium botulinum (strain Eklund 17B / Type B).